Here is a 152-residue protein sequence, read N- to C-terminus: Large ribosomal subunit protein bL9 (152 aa).

Belongs to the bacterial ribosomal protein bL9 family.

Functionally, binds to the 23S rRNA. The sequence is that of Large ribosomal subunit protein bL9 from Chlorobaculum tepidum (strain ATCC 49652 / DSM 12025 / NBRC 103806 / TLS) (Chlorobium tepidum).